We begin with the raw amino-acid sequence, 371 residues long: MNDWKRIVVKVGTSSITDERGNPSGEKILSLVRECVKLMRANKEVVLVSSGAIASGREIMQKLSKRKDLPAKQALSAVGQVRLMQYYSQLFSIFKQPIAQILLTAEDLRDRKRYINISQTFETLIEEKVVPIVNENDTVAVEEIKIGDNDTLSAKVACAINADLLVILSDVEGLYSEDPNLSPNAVLIRDIYEIDEKIEKIAGPGKGTGGMYTKVQAAKIVTEAGIPMILAKADLENVLERIVLKKEKVGTMFYPVERHLNRRKHWMLFMAKPQGKVYIDDGAKDALLKKGKSLLPVGVKKIEGEFVRGDTVSILDLTGEEIGRGITNYDSSELERIKGKNTEEIKNILGEDFYEEVIHRNNLVLINRGDS.

An ATP-binding site is contributed by Lys-10. Substrate is bound by residues Ser-50, Asp-137, and Asn-149. ATP-binding positions include 169–170 and 208–214; these read SD and TGGMYTK. Residues 274-352 enclose the PUA domain; it reads QGKVYIDDGA…EEIKNILGED (79 aa).

It belongs to the glutamate 5-kinase family.

It is found in the cytoplasm. It catalyses the reaction L-glutamate + ATP = L-glutamyl 5-phosphate + ADP. It participates in amino-acid biosynthesis; L-proline biosynthesis; L-glutamate 5-semialdehyde from L-glutamate: step 1/2. Its function is as follows. Catalyzes the transfer of a phosphate group to glutamate to form L-glutamate 5-phosphate. The polypeptide is Glutamate 5-kinase (Dictyoglomus thermophilum (strain ATCC 35947 / DSM 3960 / H-6-12)).